Consider the following 184-residue polypeptide: ATP synthase subunit delta (184 aa).

Belongs to the ATPase delta chain family. As to quaternary structure, F-type ATPases have 2 components, F(1) - the catalytic core - and F(0) - the membrane proton channel. F(1) has five subunits: alpha(3), beta(3), gamma(1), delta(1), epsilon(1). CF(0) has four main subunits: a(1), b(1), b'(1) and c(10-14). The alpha and beta chains form an alternating ring which encloses part of the gamma chain. F(1) is attached to F(0) by a central stalk formed by the gamma and epsilon chains, while a peripheral stalk is formed by the delta, b and b' chains.

Its subcellular location is the cell inner membrane. In terms of biological role, f(1)F(0) ATP synthase produces ATP from ADP in the presence of a proton or sodium gradient. F-type ATPases consist of two structural domains, F(1) containing the extramembraneous catalytic core and F(0) containing the membrane proton channel, linked together by a central stalk and a peripheral stalk. During catalysis, ATP synthesis in the catalytic domain of F(1) is coupled via a rotary mechanism of the central stalk subunits to proton translocation. Its function is as follows. This protein is part of the stalk that links CF(0) to CF(1). It either transmits conformational changes from CF(0) to CF(1) or is implicated in proton conduction. This is ATP synthase subunit delta from Erythrobacter litoralis (strain HTCC2594).